Reading from the N-terminus, the 88-residue chain is Small ribosomal subunit protein bS20 (88 aa).

Residues 1–27 (MANSKSAKKRALQSEKRRQHNASRRSM) form a disordered region.

The protein belongs to the bacterial ribosomal protein bS20 family.

Its function is as follows. Binds directly to 16S ribosomal RNA. This chain is Small ribosomal subunit protein bS20, found in Shewanella loihica (strain ATCC BAA-1088 / PV-4).